We begin with the raw amino-acid sequence, 218 residues long: Small ribosomal subunit protein uS3c (218 aa).

One can recognise a KH type-2 domain in the interval 47 to 118 (VYKNIRNSSN…KLRMTLTEVT (72 aa)).

It belongs to the universal ribosomal protein uS3 family. In terms of assembly, part of the 30S ribosomal subunit.

It localises to the plastid. The protein resides in the chloroplast. The chain is Small ribosomal subunit protein uS3c (rps3) from Physcomitrium patens (Spreading-leaved earth moss).